A 176-amino-acid chain; its full sequence is Probable Brix domain-containing ribosomal biogenesis protein (176 aa).

The region spanning 6–176 is the Brix domain; that stretch reads IEIVFTSSRD…QLYDRNKNIN (171 aa).

Its function is as follows. Probably involved in the biogenesis of the ribosome. In Sulfurisphaera tokodaii (strain DSM 16993 / JCM 10545 / NBRC 100140 / 7) (Sulfolobus tokodaii), this protein is Probable Brix domain-containing ribosomal biogenesis protein.